The chain runs to 217 residues: Regulator of G-protein signaling 19 (217 aa).

The tract at residues 1-29 (MPTPHEAEKQITGPEEADRPPSMSSHDTA) is disordered. A phosphoserine mark is found at serine 24 and serine 97. The region spanning 90-206 (SFDKLMHSPA…LSSPTYRALL (117 aa)) is the RGS domain. Serine 151 carries the phosphoserine; by MAPK1 and MAPK3 modification. The segment at 207 to 217 (LQGPSQSSSEA) is interaction with GIPC.

Interacts with GIPC PDZ domain. Interacts with GNAO1. Fatty acylated. Heavily palmitoylated in the cysteine string motif. Post-translationally, phosphorylated, mainly on serine residues. In terms of tissue distribution, highest expression in lung. Placenta, liver and heart also express high levels of GAIP.

It localises to the membrane. Functionally, inhibits signal transduction by increasing the GTPase activity of G protein alpha subunits thereby driving them into their inactive GDP-bound form. Binds to G-alpha subfamily 1 members, with the order G(i)a3 &gt; G(i)a1 &gt; G(o)a &gt;&gt; G(z)a/G(i)a2. Activity on G(z)-alpha is inhibited by phosphorylation and palmitoylation of the G-protein. The polypeptide is Regulator of G-protein signaling 19 (RGS19) (Homo sapiens (Human)).